The sequence spans 500 residues: MAIKANEISSLIKKQIENFTPDFEVAETGVVTYVGDGIARAYGLENAMSGELVEFSNGVLGMAQNLDATDVGIIVLGDFLSIREGDTVKRTGKIMEIQVGEELIGRVVNPLGQPVDGLGELNTGKTRPVEAKAPGVMQRKSVSEPLQTGLKAIDALVPIGRGQRELIIGDRQTGKTSVAIDAILNQKGQDMICIYVAIGQKESTVRTQVETLRKLGAMDYTIVVTASASQPSPLLYIAPYAGAAMGEEFMYNGKHVLVVYDDLSKQAVAYRELSLLLRRPPGREAYPGDVFYLHSRLLERAAKLSDDLGGGSMTALPFIETQAGDISAYIATNVISITDGQIFLENDLFYSGVRPAIDAGSSVSRVGGAAQIKAMKKVAGTLRLDLASFRELEAFTQFGSDLDEATQAKLNRGRRTVEVLKQPLHKPLAVEKQVLILYALTHGHLDDVPVDDVLDFETKMFDFFDANYAELLNVITETKDLPEEAKLDEAIKAFKNTTNY.

169–176 (GDRQTGKT) is a binding site for ATP.

The protein belongs to the ATPase alpha/beta chains family. As to quaternary structure, F-type ATPases have 2 components, CF(1) - the catalytic core - and CF(0) - the membrane proton channel. CF(1) has five subunits: alpha(3), beta(3), gamma(1), delta(1), epsilon(1). CF(0) has three main subunits: a(1), b(2) and c(9-12). The alpha and beta chains form an alternating ring which encloses part of the gamma chain. CF(1) is attached to CF(0) by a central stalk formed by the gamma and epsilon chains, while a peripheral stalk is formed by the delta and b chains.

Its subcellular location is the cell membrane. The catalysed reaction is ATP + H2O + 4 H(+)(in) = ADP + phosphate + 5 H(+)(out). Produces ATP from ADP in the presence of a proton gradient across the membrane. The alpha chain is a regulatory subunit. The sequence is that of ATP synthase subunit alpha from Lactococcus lactis subsp. lactis (strain IL1403) (Streptococcus lactis).